We begin with the raw amino-acid sequence, 216 residues long: Endo-1,4-beta-xylanase 2 (216 aa).

Residues 1–27 (MVSFSSLFVAACAAVTAFALPNELEKR) form the signal peptide. In terms of domain architecture, GH11 spans 28–216 (AITSNEQGTN…SSGSASITVS (189 aa)). N-linked (GlcNAc...) asparagine glycosylation is present at asparagine 87. The Nucleophile role is filled by glutamate 112. The active-site Proton donor is glutamate 203.

The protein belongs to the glycosyl hydrolase 11 (cellulase G) family.

The protein localises to the secreted. The catalysed reaction is Endohydrolysis of (1-&gt;4)-beta-D-xylosidic linkages in xylans.. Its pathway is glycan degradation; xylan degradation. Functionally, endo-1,4-beta-xylanase involved in the hydrolysis of xylan, a major structural heterogeneous polysaccharide found in plant biomass representing the second most abundant polysaccharide in the biosphere, after cellulose. This chain is Endo-1,4-beta-xylanase 2 (xyn2), found in Rhizopus oryzae (Mucormycosis agent).